We begin with the raw amino-acid sequence, 299 residues long: Oxygen-dependent coproporphyrinogen-III oxidase (299 aa).

Serine 92 serves as a coordination point for substrate. Positions 96 and 106 each coordinate a divalent metal cation. Residue histidine 106 is the Proton donor of the active site. Asparagine 108–arginine 110 serves as a coordination point for substrate. A divalent metal cation contacts are provided by histidine 145 and histidine 175. The segment at tyrosine 240–glutamate 275 is important for dimerization. Glycine 258–arginine 260 is a substrate binding site.

It belongs to the aerobic coproporphyrinogen-III oxidase family. In terms of assembly, homodimer. A divalent metal cation is required as a cofactor.

It is found in the cytoplasm. The enzyme catalyses coproporphyrinogen III + O2 + 2 H(+) = protoporphyrinogen IX + 2 CO2 + 2 H2O. Its pathway is porphyrin-containing compound metabolism; protoporphyrin-IX biosynthesis; protoporphyrinogen-IX from coproporphyrinogen-III (O2 route): step 1/1. Involved in the heme biosynthesis. Catalyzes the aerobic oxidative decarboxylation of propionate groups of rings A and B of coproporphyrinogen-III to yield the vinyl groups in protoporphyrinogen-IX. The polypeptide is Oxygen-dependent coproporphyrinogen-III oxidase (Salmonella arizonae (strain ATCC BAA-731 / CDC346-86 / RSK2980)).